The following is a 375-amino-acid chain: Alcohol dehydrogenase 1B (375 aa).

Serine 1 is modified (N-acetylserine). The Zn(2+) site is built by cysteine 46, histidine 67, cysteine 97, cysteine 100, cysteine 103, cysteine 111, and cysteine 174. NAD(+)-binding positions include 199 to 204 (GLGGVG), aspartate 223, lysine 228, 293 to 295 (VGV), and arginine 370.

Belongs to the zinc-containing alcohol dehydrogenase family. Class-I subfamily. In terms of assembly, multimeric (with different ratios of monomers). It depends on Zn(2+) as a cofactor.

It is found in the cytoplasm. It carries out the reaction a primary alcohol + NAD(+) = an aldehyde + NADH + H(+). The catalysed reaction is a secondary alcohol + NAD(+) = a ketone + NADH + H(+). This Saara hardwickii (Indian spiny-tailed lizard) protein is Alcohol dehydrogenase 1B.